The following is a 304-amino-acid chain: Aspartate carbamoyltransferase catalytic subunit (304 aa).

Residues R57 and T58 each coordinate carbamoyl phosphate. An L-aspartate-binding site is contributed by K86. Carbamoyl phosphate contacts are provided by R107, H135, and Q138. L-aspartate contacts are provided by R168 and R229. Carbamoyl phosphate-binding residues include L266 and P267.

It belongs to the aspartate/ornithine carbamoyltransferase superfamily. ATCase family. As to quaternary structure, heterooligomer of catalytic and regulatory chains.

It carries out the reaction carbamoyl phosphate + L-aspartate = N-carbamoyl-L-aspartate + phosphate + H(+). It participates in pyrimidine metabolism; UMP biosynthesis via de novo pathway; (S)-dihydroorotate from bicarbonate: step 2/3. Functionally, catalyzes the condensation of carbamoyl phosphate and aspartate to form carbamoyl aspartate and inorganic phosphate, the committed step in the de novo pyrimidine nucleotide biosynthesis pathway. In Methanosphaera stadtmanae (strain ATCC 43021 / DSM 3091 / JCM 11832 / MCB-3), this protein is Aspartate carbamoyltransferase catalytic subunit.